Here is a 90-residue protein sequence, read N- to C-terminus: Small ribosomal subunit protein bS20 (90 aa).

The interval 1-25 (MANSAQARKRARQAAKANSHNSALR) is disordered.

It belongs to the bacterial ribosomal protein bS20 family.

Binds directly to 16S ribosomal RNA. This chain is Small ribosomal subunit protein bS20, found in Burkholderia orbicola (strain MC0-3).